A 481-amino-acid polypeptide reads, in one-letter code: Proline--tRNA ligase (481 aa).

Belongs to the class-II aminoacyl-tRNA synthetase family. ProS type 3 subfamily. Homodimer.

It is found in the cytoplasm. It catalyses the reaction tRNA(Pro) + L-proline + ATP = L-prolyl-tRNA(Pro) + AMP + diphosphate. In terms of biological role, catalyzes the attachment of proline to tRNA(Pro) in a two-step reaction: proline is first activated by ATP to form Pro-AMP and then transferred to the acceptor end of tRNA(Pro). This chain is Proline--tRNA ligase, found in Chlorobium luteolum (strain DSM 273 / BCRC 81028 / 2530) (Pelodictyon luteolum).